Here is a 372-residue protein sequence, read N- to C-terminus: tRNA-specific 2-thiouridylase MnmA (372 aa).

Residues 17–24 (GMSGGVDS) and Met-43 each bind ATP. Positions 103–105 (NPD) are interaction with target base in tRNA. Residue Cys-108 is the Nucleophile of the active site. Cys-108 and Cys-205 form a disulfide bridge. Gly-133 serves as a coordination point for ATP. The segment at 155-157 (KDQ) is interaction with tRNA. Catalysis depends on Cys-205, which acts as the Cysteine persulfide intermediate. An interaction with tRNA region spans residues 317–318 (RY).

This sequence belongs to the MnmA/TRMU family.

Its subcellular location is the cytoplasm. It catalyses the reaction S-sulfanyl-L-cysteinyl-[protein] + uridine(34) in tRNA + AH2 + ATP = 2-thiouridine(34) in tRNA + L-cysteinyl-[protein] + A + AMP + diphosphate + H(+). Its function is as follows. Catalyzes the 2-thiolation of uridine at the wobble position (U34) of tRNA, leading to the formation of s(2)U34. In Shewanella sediminis (strain HAW-EB3), this protein is tRNA-specific 2-thiouridylase MnmA.